The primary structure comprises 369 residues: Anhydro-N-acetylmuramic acid kinase (369 aa).

Residue 12 to 19 (GTSLDGVD) participates in ATP binding.

The protein belongs to the anhydro-N-acetylmuramic acid kinase family.

The enzyme catalyses 1,6-anhydro-N-acetyl-beta-muramate + ATP + H2O = N-acetyl-D-muramate 6-phosphate + ADP + H(+). It functions in the pathway amino-sugar metabolism; 1,6-anhydro-N-acetylmuramate degradation. The protein operates within cell wall biogenesis; peptidoglycan recycling. Catalyzes the specific phosphorylation of 1,6-anhydro-N-acetylmuramic acid (anhMurNAc) with the simultaneous cleavage of the 1,6-anhydro ring, generating MurNAc-6-P. Is required for the utilization of anhMurNAc either imported from the medium or derived from its own cell wall murein, and thus plays a role in cell wall recycling. In Escherichia coli O81 (strain ED1a), this protein is Anhydro-N-acetylmuramic acid kinase.